The sequence spans 329 residues: Taste receptor type 2 member 102 (329 aa).

The Extracellular portion of the chain corresponds to methionine 1–asparagine 9. Residues phenylalanine 10–valine 30 traverse the membrane as a helical segment. Residues leucine 31–aspartate 47 lie on the Cytoplasmic side of the membrane. Residues lysine 48 to phenylalanine 68 form a helical membrane-spanning segment. At lysine 69 to isoleucine 85 the chain is on the extracellular side. The chain crosses the membrane as a helical span at residues isoleucine 86–tyrosine 108. The Cytoplasmic portion of the chain corresponds to leucine 109–glutamine 129. The helical transmembrane segment at leucine 130–methionine 150 threads the bilayer. The Extracellular segment spans residues leucine 151–asparagine 181. An N-linked (GlcNAc...) asparagine glycan is attached at asparagine 161. Residues methionine 182–phenylalanine 202 form a helical membrane-spanning segment. The Cytoplasmic portion of the chain corresponds to serine 203–arginine 231. A helical transmembrane segment spans residues isoleucine 232–isoleucine 252. Over alanine 253–aspartate 262 the chain is Extracellular. Residues isoleucine 263–glycine 283 traverse the membrane as a helical segment. Residues asparagine 284–arginine 329 lie on the Cytoplasmic side of the membrane.

Belongs to the G-protein coupled receptor T2R family.

It localises to the membrane. Its function is as follows. Putative taste receptor which may play a role in the perception of bitterness. The chain is Taste receptor type 2 member 102 from Mus musculus (Mouse).